A 214-amino-acid chain; its full sequence is ATP phosphoribosyltransferase (214 aa).

This sequence belongs to the ATP phosphoribosyltransferase family. Short subfamily. Heteromultimer composed of HisG and HisZ subunits.

The protein resides in the cytoplasm. The catalysed reaction is 1-(5-phospho-beta-D-ribosyl)-ATP + diphosphate = 5-phospho-alpha-D-ribose 1-diphosphate + ATP. It functions in the pathway amino-acid biosynthesis; L-histidine biosynthesis; L-histidine from 5-phospho-alpha-D-ribose 1-diphosphate: step 1/9. Its function is as follows. Catalyzes the condensation of ATP and 5-phosphoribose 1-diphosphate to form N'-(5'-phosphoribosyl)-ATP (PR-ATP). Has a crucial role in the pathway because the rate of histidine biosynthesis seems to be controlled primarily by regulation of HisG enzymatic activity. The chain is ATP phosphoribosyltransferase from Leptothrix cholodnii (strain ATCC 51168 / LMG 8142 / SP-6) (Leptothrix discophora (strain SP-6)).